The chain runs to 209 residues: Kunitz trypsin inhibitor 1 (209 aa).

A signal peptide spans 1–22 (MKATISITTIFLVVALAAPSLA). 2 disulfide bridges follow: Cys63–Cys107 and Cys154–Cys162. Asn156 carries N-linked (GlcNAc...) asparagine glycosylation.

This sequence belongs to the protease inhibitor I3 (leguminous Kunitz-type inhibitor) family.

In terms of biological role, exhibits Kunitz trypsin protease inhibitor activity. The protein is Kunitz trypsin inhibitor 1 of Arabidopsis thaliana (Mouse-ear cress).